The following is a 435-amino-acid chain: 5-methylthioadenosine/S-adenosylhomocysteine deaminase (435 aa).

Zn(2+) is bound by residues histidine 65 and histidine 67. Substrate-binding residues include glutamate 94, arginine 150, and histidine 189. Histidine 216 is a binding site for Zn(2+). Positions 219 and 304 each coordinate substrate. Aspartate 304 provides a ligand contact to Zn(2+).

The protein belongs to the metallo-dependent hydrolases superfamily. MTA/SAH deaminase family. Zn(2+) is required as a cofactor.

The enzyme catalyses S-adenosyl-L-homocysteine + H2O + H(+) = S-inosyl-L-homocysteine + NH4(+). The catalysed reaction is S-methyl-5'-thioadenosine + H2O + H(+) = S-methyl-5'-thioinosine + NH4(+). In terms of biological role, catalyzes the deamination of 5-methylthioadenosine and S-adenosyl-L-homocysteine into 5-methylthioinosine and S-inosyl-L-homocysteine, respectively. Is also able to deaminate adenosine. The chain is 5-methylthioadenosine/S-adenosylhomocysteine deaminase from Bacillus cytotoxicus (strain DSM 22905 / CIP 110041 / 391-98 / NVH 391-98).